We begin with the raw amino-acid sequence, 140 residues long: Myrosinase 2 (140 aa).

The active-site Nucleophile is the R70. 2 N-linked (GlcNAc...) asparagine glycosylation sites follow: N114 and N127.

This sequence belongs to the glycosyl hydrolase 1 family. In terms of assembly, homodimer.

The catalysed reaction is a thioglucoside + H2O = a sugar + a thiol.. Its activity is regulated as follows. Inhibited by ascorbate. Degradation of glucosinolates (glucose residue linked by a thioglucoside bound to an amino acid derivative) to glucose, sulfate and any of the products: thiocyanates, isothiocyanates, nitriles, epithionitriles or oxazolidine-2-thiones. The sequence is that of Myrosinase 2 from Brevicoryne brassicae (Mealy cabbage aphid).